Here is a 180-residue protein sequence, read N- to C-terminus: Large ribosomal subunit protein uL5 (180 aa).

This sequence belongs to the universal ribosomal protein uL5 family. As to quaternary structure, part of the 50S ribosomal subunit; part of the 5S rRNA/L5/L18/L25 subcomplex. Contacts the 5S rRNA and the P site tRNA. Forms a bridge to the 30S subunit in the 70S ribosome.

Its function is as follows. This is one of the proteins that bind and probably mediate the attachment of the 5S RNA into the large ribosomal subunit, where it forms part of the central protuberance. In the 70S ribosome it contacts protein S13 of the 30S subunit (bridge B1b), connecting the 2 subunits; this bridge is implicated in subunit movement. Contacts the P site tRNA; the 5S rRNA and some of its associated proteins might help stabilize positioning of ribosome-bound tRNAs. The sequence is that of Large ribosomal subunit protein uL5 from Moorella thermoacetica (strain ATCC 39073 / JCM 9320).